Consider the following 42-residue polypeptide: Tachystatin-B1 (42 aa).

Disulfide bonds link Cys4–Cys20, Cys11–Cys25, and Cys19–Cys37.

As to expression, granular hemocytes, small secretory granules.

Its subcellular location is the secreted. Its function is as follows. Exhibits stronger antimicrobial activity against the Gram-positive bacteria (S.aureus (IC(50) is 7.4 ug/ml)) and fungi (C.albicans (IC(50) is 3.0 ug/ml) and P.pastoris (IC(50) is 0.1 ug/ml)) than Gram-negative bacteria (E.coli no inhibition at 100 ug/ml). Binds to chitin (4.3 uM are required to obtain 50% of binding). Does not cause hemolysis on sheep erythrocytes. Has no blocking activity on the P-type calcium channel. The polypeptide is Tachystatin-B1 (Tachypleus tridentatus (Japanese horseshoe crab)).